Reading from the N-terminus, the 303-residue chain is Aspartate carbamoyltransferase catalytic subunit (303 aa).

Positions 49 and 50 each coordinate carbamoyl phosphate. K77 provides a ligand contact to L-aspartate. R99, H126, and Q129 together coordinate carbamoyl phosphate. The L-aspartate site is built by R159 and R211. Carbamoyl phosphate is bound by residues S252 and P253.

The protein belongs to the aspartate/ornithine carbamoyltransferase superfamily. ATCase family. In terms of assembly, heterododecamer (2C3:3R2) of six catalytic PyrB chains organized as two trimers (C3), and six regulatory PyrI chains organized as three dimers (R2).

It carries out the reaction carbamoyl phosphate + L-aspartate = N-carbamoyl-L-aspartate + phosphate + H(+). Its pathway is pyrimidine metabolism; UMP biosynthesis via de novo pathway; (S)-dihydroorotate from bicarbonate: step 2/3. Functionally, catalyzes the condensation of carbamoyl phosphate and aspartate to form carbamoyl aspartate and inorganic phosphate, the committed step in the de novo pyrimidine nucleotide biosynthesis pathway. This is Aspartate carbamoyltransferase catalytic subunit from Listeria innocua serovar 6a (strain ATCC BAA-680 / CLIP 11262).